The chain runs to 553 residues: Hydroxylamine reductase (553 aa).

[2Fe-2S] cluster contacts are provided by Cys-3, Cys-6, Cys-18, and Cys-25. Hybrid [4Fe-2O-2S] cluster-binding residues include His-252, Glu-276, Cys-320, Cys-408, Cys-436, Cys-461, Glu-495, and Lys-497. Cys-408 carries the post-translational modification Cysteine persulfide.

This sequence belongs to the HCP family. [2Fe-2S] cluster is required as a cofactor. It depends on hybrid [4Fe-2O-2S] cluster as a cofactor.

Its subcellular location is the cytoplasm. It catalyses the reaction A + NH4(+) + H2O = hydroxylamine + AH2 + H(+). Functionally, catalyzes the reduction of hydroxylamine to form NH(3) and H(2)O. The polypeptide is Hydroxylamine reductase (Vibrio parahaemolyticus serotype O3:K6 (strain RIMD 2210633)).